We begin with the raw amino-acid sequence, 174 residues long: NADH-quinone oxidoreductase subunit I (174 aa).

2 consecutive 4Fe-4S ferredoxin-type domains span residues 44 to 74 (LNRY…VEGD) and 90 to 119 (RVYQ…MTND). [4Fe-4S] cluster-binding residues include Cys54, Cys57, Cys60, Cys64, Cys99, Cys102, Cys105, and Cys109.

Belongs to the complex I 23 kDa subunit family. NDH-1 is composed of 14 different subunits. Subunits NuoA, H, J, K, L, M, N constitute the membrane sector of the complex. It depends on [4Fe-4S] cluster as a cofactor.

The protein resides in the cell membrane. The enzyme catalyses a quinone + NADH + 5 H(+)(in) = a quinol + NAD(+) + 4 H(+)(out). NDH-1 shuttles electrons from NADH, via FMN and iron-sulfur (Fe-S) centers, to quinones in the respiratory chain. The immediate electron acceptor for the enzyme in this species is believed to be menaquinone. Couples the redox reaction to proton translocation (for every two electrons transferred, four hydrogen ions are translocated across the cytoplasmic membrane), and thus conserves the redox energy in a proton gradient. The polypeptide is NADH-quinone oxidoreductase subunit I (Mycobacterium sp. (strain JLS)).